Here is a 1265-residue protein sequence, read N- to C-terminus: 1-phosphatidylinositol 4,5-bisphosphate phosphodiesterase gamma-2 (1265 aa).

Residues 20–131 (RALELGTVMT…WLSGLKILHQ (112 aa)) form the PH domain. One can recognise a PI-PLC X-box domain in the interval 312–456 (QDMNNPLSHY…LREKIIIKHK (145 aa)). Catalysis depends on residues histidine 327 and histidine 372. SH2 domains are found at residues 532–635 (WFHK…TDPV) and 646–735 (WYYD…RYPV). Phosphotyrosine; by BTK is present on residues tyrosine 753 and tyrosine 759. An SH3 domain is found at 769-829 (MPQRTVKALY…PSNYVEDISA (61 aa)). Residues 930–1044 (LSDLVVYCKP…GYVLQPESMR (115 aa)) enclose the PI-PLC Y-box domain. The C2 domain occupies 1038 to 1169 (LQPESMRSEK…SGFRSVPLKN (132 aa)). Tyrosine 1197 carries the post-translational modification Phosphotyrosine; by BTK. Residues tyrosine 1217 and tyrosine 1245 each carry the phosphotyrosine modification.

Part of a complex composed of EEIG1, TNFRSF11A/RANK, PLCG2, GAB2, TEC and BTK; complex formation increases in the presence of TNFSF11/RANKL. Interacts (via SH2 domain) with CSF1R (tyrosine phosphorylated). Interacts constitutively with THEMIS2. Ca(2+) is required as a cofactor. Phosphorylated on tyrosine residues by CSF1R. Phosphorylated on tyrosine residues by BTK and SYK; upon ligand-induced activation of a variety of growth factor receptors and immune system receptors. Phosphorylation leads to increased phospholipase activity.

It localises to the membrane raft. It carries out the reaction a 1,2-diacyl-sn-glycero-3-phospho-(1D-myo-inositol-4,5-bisphosphate) + H2O = 1D-myo-inositol 1,4,5-trisphosphate + a 1,2-diacyl-sn-glycerol + H(+). Functionally, the production of the second messenger molecules diacylglycerol (DAG) and inositol 1,4,5-trisphosphate (IP3) is mediated by activated phosphatidylinositol-specific phospholipase C enzymes. It is a crucial enzyme in transmembrane signaling. This Rattus norvegicus (Rat) protein is 1-phosphatidylinositol 4,5-bisphosphate phosphodiesterase gamma-2.